Here is a 297-residue protein sequence, read N- to C-terminus: Signal-transducing adaptor protein 1 (297 aa).

The PH domain occupies 25–121; it reads PLYFEGFLLV…WRGFILTVTE (97 aa). Tyr-170 is subject to Phosphotyrosine. One can recognise an SH2 domain in the interval 179-273; sequence ECFYAVSRKE…GNLRPFIHSA (95 aa). The disordered stretch occupies residues 271-297; it reads HSADDNFGQDPNIEDRSEKFKKNPHNA.

As to quaternary structure, interacts with URI1; the interaction is phosphorylation-dependent occurs in a growth-dependent manner. Interacts with KIT and CSF1R. Post-translationally, phosphorylated on tyrosine by TEC. Phosphorylated on tyrosine by KIT. As to expression, expression restricted to the bone marrow.

Its subcellular location is the nucleus. The protein resides in the cytoplasm. The protein localises to the mitochondrion. May function as an adapter molecule downstream of KIT in the proliferation or differentiation of hematopoietic stem cells. The chain is Signal-transducing adaptor protein 1 (Stap1) from Mus musculus (Mouse).